The chain runs to 994 residues: Glycine dehydrogenase (decarboxylating), mitochondrial (994 aa).

Residues 1-21 (MLKLLRNNGINKLKSNLIRNY) constitute a mitochondrion transit peptide. Lys742 is modified (N6-(pyridoxal phosphate)lysine).

The protein belongs to the GcvP family. In terms of assembly, homodimer. The glycine cleavage system is composed of four proteins: P, T, L and H. Pyridoxal 5'-phosphate is required as a cofactor.

It is found in the mitochondrion. The enzyme catalyses N(6)-[(R)-lipoyl]-L-lysyl-[glycine-cleavage complex H protein] + glycine + H(+) = N(6)-[(R)-S(8)-aminomethyldihydrolipoyl]-L-lysyl-[glycine-cleavage complex H protein] + CO2. Functionally, the glycine cleavage system catalyzes the degradation of glycine. The P protein binds the alpha-amino group of glycine through its pyridoxal phosphate cofactor; CO(2) is released and the remaining methylamine moiety is then transferred to the lipoamide cofactor of the H protein. The chain is Glycine dehydrogenase (decarboxylating), mitochondrial (gcvP) from Dictyostelium discoideum (Social amoeba).